We begin with the raw amino-acid sequence, 54 residues long: Large ribosomal subunit protein bL33C (54 aa).

It belongs to the bacterial ribosomal protein bL33 family.

In Streptomyces coelicolor (strain ATCC BAA-471 / A3(2) / M145), this protein is Large ribosomal subunit protein bL33C (rpmG3).